The sequence spans 229 residues: Potassium/proton antiporter CemA (229 aa).

3 helical membrane-spanning segments follow: residues 7–27, 106–126, and 189–209; these read LTPL…SLSF, IILH…FFIM, and IISG…KYWI.

The protein belongs to the CemA family.

Its subcellular location is the plastid. It localises to the chloroplast inner membrane. It catalyses the reaction K(+)(in) + H(+)(out) = K(+)(out) + H(+)(in). In terms of biological role, contributes to K(+)/H(+) antiport activity by supporting proton efflux to control proton extrusion and homeostasis in chloroplasts in a light-dependent manner to modulate photosynthesis. Prevents excessive induction of non-photochemical quenching (NPQ) under continuous-light conditions. Indirectly promotes efficient inorganic carbon uptake into chloroplasts. The sequence is that of Potassium/proton antiporter CemA from Ceratophyllum demersum (Rigid hornwort).